Here is a 156-residue protein sequence, read N- to C-terminus: ATP synthase subunit b (156 aa).

A helical transmembrane segment spans residues 12 to 32 (IAFAIFVLFCMKFIWPALMGA).

The protein belongs to the ATPase B chain family. As to quaternary structure, F-type ATPases have 2 components, F(1) - the catalytic core - and F(0) - the membrane proton channel. F(1) has five subunits: alpha(3), beta(3), gamma(1), delta(1), epsilon(1). F(0) has three main subunits: a(1), b(2) and c(10-14). The alpha and beta chains form an alternating ring which encloses part of the gamma chain. F(1) is attached to F(0) by a central stalk formed by the gamma and epsilon chains, while a peripheral stalk is formed by the delta and b chains.

It is found in the cell inner membrane. Functionally, f(1)F(0) ATP synthase produces ATP from ADP in the presence of a proton or sodium gradient. F-type ATPases consist of two structural domains, F(1) containing the extramembraneous catalytic core and F(0) containing the membrane proton channel, linked together by a central stalk and a peripheral stalk. During catalysis, ATP synthesis in the catalytic domain of F(1) is coupled via a rotary mechanism of the central stalk subunits to proton translocation. In terms of biological role, component of the F(0) channel, it forms part of the peripheral stalk, linking F(1) to F(0). This is ATP synthase subunit b from Psychrobacter sp. (strain PRwf-1).